The chain runs to 279 residues: Large ribosomal subunit protein uL2 (279 aa).

The disordered stretch occupies residues 218–279 (RPQTRGSAMN…ITRRKSNPKR (62 aa)). Positions 255 to 279 (KGSKTRRKKASDKLIITRRKSNPKR) are enriched in basic residues.

Belongs to the universal ribosomal protein uL2 family. As to quaternary structure, part of the 50S ribosomal subunit. Forms a bridge to the 30S subunit in the 70S ribosome.

Its function is as follows. One of the primary rRNA binding proteins. Required for association of the 30S and 50S subunits to form the 70S ribosome, for tRNA binding and peptide bond formation. It has been suggested to have peptidyltransferase activity; this is somewhat controversial. Makes several contacts with the 16S rRNA in the 70S ribosome. The polypeptide is Large ribosomal subunit protein uL2 (Sulfurimonas denitrificans (strain ATCC 33889 / DSM 1251) (Thiomicrospira denitrificans (strain ATCC 33889 / DSM 1251))).